Reading from the N-terminus, the 107-residue chain is Nucleoid-associated protein R00231 (107 aa).

It belongs to the YbaB/EbfC family. In terms of assembly, homodimer.

The protein localises to the cytoplasm. It is found in the nucleoid. Binds to DNA and alters its conformation. May be involved in regulation of gene expression, nucleoid organization and DNA protection. The protein is Nucleoid-associated protein R00231 of Rhizobium meliloti (strain 1021) (Ensifer meliloti).